A 343-amino-acid polypeptide reads, in one-letter code: Phenylalanine--tRNA ligase alpha subunit (343 aa).

E256 is a Mg(2+) binding site.

It belongs to the class-II aminoacyl-tRNA synthetase family. Phe-tRNA synthetase alpha subunit type 1 subfamily. Tetramer of two alpha and two beta subunits. The cofactor is Mg(2+).

The protein localises to the cytoplasm. The catalysed reaction is tRNA(Phe) + L-phenylalanine + ATP = L-phenylalanyl-tRNA(Phe) + AMP + diphosphate + H(+). In Prosthecochloris aestuarii (strain DSM 271 / SK 413), this protein is Phenylalanine--tRNA ligase alpha subunit.